Reading from the N-terminus, the 86-residue chain is Large ribosomal subunit protein uL23 (86 aa).

It belongs to the universal ribosomal protein uL23 family. In terms of assembly, part of the 50S ribosomal subunit. Contacts protein L29.

Binds to 23S rRNA. One of the proteins that surrounds the polypeptide exit tunnel on the outside of the ribosome. The sequence is that of Large ribosomal subunit protein uL23 from Methanococcus maripaludis (strain C6 / ATCC BAA-1332).